Consider the following 345-residue polypeptide: MSNAYKEAGVDIEAGYEAVNRMKRHVERTARKGVLGGLGGFGGNFDLSTLGLKEPVLVSGTDGVGTKLMIAFMANKHDTIGQDAVAMCVNDIVVQGAEPLYFLDYLACGKAVPEKIEAIVKGVADGCEIAGCALIGGETAEMPGMYEEDEYDLAGFSVGAVEKKDLLTGEHIQAGDVLIGLPSSGLHSNGFSLVRKVLLQDAGLTLQTECATLGKTLGEELLTPTKIYVKPLLACLKQGLLAGAAHITGGGFYENIPRMLPKGVGIHIDYGSWPIPPIFSLIQEKGGLSEQDLFHTFNMGIGMVLAVPEDKHQQALATLEANGEDAYIIGRVTPTEGTVIGGIGA.

It belongs to the AIR synthase family.

Its subcellular location is the cytoplasm. It catalyses the reaction 2-formamido-N(1)-(5-O-phospho-beta-D-ribosyl)acetamidine + ATP = 5-amino-1-(5-phospho-beta-D-ribosyl)imidazole + ADP + phosphate + H(+). Its pathway is purine metabolism; IMP biosynthesis via de novo pathway; 5-amino-1-(5-phospho-D-ribosyl)imidazole from N(2)-formyl-N(1)-(5-phospho-D-ribosyl)glycinamide: step 2/2. This chain is Phosphoribosylformylglycinamidine cyclo-ligase, found in Shouchella clausii (strain KSM-K16) (Alkalihalobacillus clausii).